Here is a 534-residue protein sequence, read N- to C-terminus: GMP synthase [glutamine-hydrolyzing] (534 aa).

The region spanning 20-210 (MLIILDFGSQ…VYHICDCEPT (191 aa)) is the Glutamine amidotransferase type-1 domain. The active-site Nucleophile is cysteine 97. Active-site residues include histidine 184 and glutamate 186. In terms of domain architecture, GMPS ATP-PPase spans 211 to 409 (WTTETFVEEA…LGLPEEIVKR (199 aa)). An ATP-binding site is contributed by 238-244 (SGGVDSS).

In terms of assembly, homodimer.

It carries out the reaction XMP + L-glutamine + ATP + H2O = GMP + L-glutamate + AMP + diphosphate + 2 H(+). It functions in the pathway purine metabolism; GMP biosynthesis; GMP from XMP (L-Gln route): step 1/1. Its function is as follows. Catalyzes the synthesis of GMP from XMP. The sequence is that of GMP synthase [glutamine-hydrolyzing] from Synechococcus sp. (strain ATCC 27144 / PCC 6301 / SAUG 1402/1) (Anacystis nidulans).